The primary structure comprises 838 residues: pre-rRNA 2'-O-ribose RNA methyltransferase FTSJ3 (838 aa).

Gly-56, Trp-58, Asp-76, Asp-92, and Asp-117 together coordinate S-adenosyl-L-methionine. Catalysis depends on Lys-157, which acts as the Proton acceptor. The tract at residues 332 to 367 (ISLSSEEEEEGDEEEAVAETKQAPEEEEEREEEQLN) is disordered. Phosphoserine is present on residues Ser-333, Ser-335, and Ser-336. Positions 336–348 (SEEEEEGDEEEAV) are enriched in acidic residues. Arg-390 carries the post-translational modification Citrulline. The tract at residues 453–482 (IYVSDAEDDDDTSLESDLDPEELAGVRTHS) is disordered. Residues 457–474 (DAEDDDDTSLESDLDPEE) show a composition bias toward acidic residues. A phosphoserine mark is found at Ser-532 and Ser-545. The segment at 537-639 (DADEALEISQ…GRGSKADEDG (103 aa)) is disordered. Lys-571 is covalently cross-linked (Glycyl lysine isopeptide (Lys-Gly) (interchain with G-Cter in SUMO2)). Ser-576 bears the Phosphoserine mark. Glycyl lysine isopeptide (Lys-Gly) (interchain with G-Cter in SUMO2) cross-links involve residues Lys-634 and Lys-650. The residue at position 667 (Ser-667) is a Phosphoserine. Lys-669 participates in a covalent cross-link: Glycyl lysine isopeptide (Lys-Gly) (interchain with G-Cter in SUMO2). The residue at position 679 (Ser-679) is a Phosphoserine. Residue Lys-701 forms a Glycyl lysine isopeptide (Lys-Gly) (interchain with G-Cter in SUMO2) linkage. The stretch at 730-768 (IKKVAEAKARKKRRVLKKLEQTKKKAEAVVNTVDISERE) forms a coiled coil. Arg-774 is modified (citrulline). The span at 802-812 (VRRPAGVKGHF) shows a compositional bias: basic residues. Positions 802-838 (VRRPAGVKGHFKVVDSRMKKDQRAQQRKEQKKKHKRK) are disordered. Basic and acidic residues predominate over residues 813 to 829 (KVVDSRMKKDQRAQQRK).

Belongs to the class I-like SAM-binding methyltransferase superfamily. RNA methyltransferase RlmE family. SPB1 subfamily. Interacts with NIP7. Post-translationally, citrullinated by PADI4.

It is found in the nucleus. Its subcellular location is the nucleolus. The catalysed reaction is a ribonucleotide in rRNA + S-adenosyl-L-methionine = a 2'-O-methylribonucleotide in rRNA + S-adenosyl-L-homocysteine + H(+). Functionally, RNA 2'-O-methyltransferase involved in the processing of the 34S pre-rRNA to 18S rRNA and in 40S ribosomal subunit formation. The protein is pre-rRNA 2'-O-ribose RNA methyltransferase FTSJ3 (Ftsj3) of Mus musculus (Mouse).